We begin with the raw amino-acid sequence, 132 residues long: Ribosome-binding factor A (132 aa).

Belongs to the RbfA family. As to quaternary structure, monomer. Binds 30S ribosomal subunits, but not 50S ribosomal subunits or 70S ribosomes.

The protein resides in the cytoplasm. In terms of biological role, one of several proteins that assist in the late maturation steps of the functional core of the 30S ribosomal subunit. Associates with free 30S ribosomal subunits (but not with 30S subunits that are part of 70S ribosomes or polysomes). Required for efficient processing of 16S rRNA. May interact with the 5'-terminal helix region of 16S rRNA. This chain is Ribosome-binding factor A, found in Burkholderia lata (strain ATCC 17760 / DSM 23089 / LMG 22485 / NCIMB 9086 / R18194 / 383).